The chain runs to 156 residues: Small ribosomal subunit protein uS7 (156 aa).

This sequence belongs to the universal ribosomal protein uS7 family. As to quaternary structure, part of the 30S ribosomal subunit. Contacts proteins S9 and S11.

In terms of biological role, one of the primary rRNA binding proteins, it binds directly to 16S rRNA where it nucleates assembly of the head domain of the 30S subunit. Is located at the subunit interface close to the decoding center, probably blocks exit of the E-site tRNA. The polypeptide is Small ribosomal subunit protein uS7 (Synechococcus sp. (strain JA-3-3Ab) (Cyanobacteria bacterium Yellowstone A-Prime)).